Consider the following 111-residue polypeptide: Probable 4-amino-4-deoxy-L-arabinose-phosphoundecaprenol flippase subunit ArnE (111 aa).

The Cytoplasmic portion of the chain corresponds to 1–35 (MIWLTLVFASLLSVAGQLCQKQATCFAAVNKRRKH). Residues 36–56 (IVLWLGLALACLGLAMVLWLL) form a helical membrane-spanning segment. One can recognise an EamA domain in the interval 40–109 (LGLALACLGL…IIGGIVILGS (70 aa)). Residues 57-60 (VLQN) are Periplasmic-facing. The helical transmembrane segment at 61 to 81 (VPVGIAYPMLSLNFVWVTLAA) threads the bilayer. At 82–87 (VKLWHE) the chain is on the cytoplasmic side. A helical transmembrane segment spans residues 88–108 (PVSLRHWCGLAFIIGGIVILG). The Periplasmic portion of the chain corresponds to 109 to 111 (STV).

Belongs to the ArnE family. In terms of assembly, heterodimer of ArnE and ArnF.

The protein resides in the cell inner membrane. The protein operates within bacterial outer membrane biogenesis; lipopolysaccharide biosynthesis. In terms of biological role, translocates 4-amino-4-deoxy-L-arabinose-phosphoundecaprenol (alpha-L-Ara4N-phosphoundecaprenol) from the cytoplasmic to the periplasmic side of the inner membrane. This Escherichia coli O81 (strain ED1a) protein is Probable 4-amino-4-deoxy-L-arabinose-phosphoundecaprenol flippase subunit ArnE.